Reading from the N-terminus, the 439-residue chain is Ornithine aminotransferase, mitochondrial (439 aa).

A mitochondrion; in hepatic form-targeting transit peptide spans methionine 1 to alanine 25. Residues methionine 1–glutamine 35 constitute a mitochondrion; in renal form transit peptide. 2 positions are modified to N6-acetyllysine: lysine 49 and lysine 66. Position 102 is an N6-succinyllysine (lysine 102). Position 107 is an N6-acetyllysine; alternate (lysine 107). Lysine 107 carries the post-translational modification N6-succinyllysine; alternate. An N6-(pyridoxal phosphate)lysine modification is found at lysine 292. The residue at position 362 (lysine 362) is an N6-acetyllysine; alternate. Position 362 is an N6-succinyllysine; alternate (lysine 362). N6-acetyllysine is present on residues lysine 386 and lysine 392. An N6-acetyllysine; alternate modification is found at lysine 405. Lysine 405 is subject to N6-succinyllysine; alternate. Position 421 is an N6-acetyllysine (lysine 421).

The protein belongs to the class-III pyridoxal-phosphate-dependent aminotransferase family. Homohexamer. Pyridoxal 5'-phosphate serves as cofactor.

The protein resides in the mitochondrion matrix. It catalyses the reaction L-ornithine + 2-oxoglutarate = L-glutamate 5-semialdehyde + L-glutamate. It functions in the pathway amino-acid biosynthesis; L-proline biosynthesis; L-glutamate 5-semialdehyde from L-ornithine: step 1/1. Catalyzes the reversible interconversion of L-ornithine and 2-oxoglutarate to L-glutamate semialdehyde and L-glutamate. The protein is Ornithine aminotransferase, mitochondrial (OAT) of Homo sapiens (Human).